A 318-amino-acid chain; its full sequence is D-alanine--D-alanine ligase (318 aa).

The region spanning 116 to 315 (KQVWQSLGLP…FEQLSLAVLA (200 aa)) is the ATP-grasp domain. 146 to 201 (MSRLGDLVMVKPAQEGSSIGMAKVSNAQQLAAAIQQAFEYDDKVLLEQFIQGSEYT) provides a ligand contact to ATP. Residues Asp269, Glu282, and Asn284 each contribute to the Mg(2+) site.

This sequence belongs to the D-alanine--D-alanine ligase family. Mg(2+) serves as cofactor. The cofactor is Mn(2+).

Its subcellular location is the cytoplasm. The enzyme catalyses 2 D-alanine + ATP = D-alanyl-D-alanine + ADP + phosphate + H(+). Its pathway is cell wall biogenesis; peptidoglycan biosynthesis. In terms of biological role, cell wall formation. This is D-alanine--D-alanine ligase from Pseudoalteromonas atlantica (strain T6c / ATCC BAA-1087).